A 125-amino-acid polypeptide reads, in one-letter code: Small ribosomal subunit protein eS25 (125 aa).

Residues Met1–Val23 show a composition bias toward basic and acidic residues. A disordered region spans residues Met1–Gly38. Basic residues predominate over residues Gly28–Gly38. An N6-acetyllysine modification is found at Lys43. N6-acetyllysine; alternate is present on Lys52. Lys52 carries the N6-succinyllysine; alternate modification. N6-acetyllysine is present on residues Lys60 and Lys66. Lys94 bears the N6-acetyllysine; alternate mark. Lys94 is subject to N6-succinyllysine; alternate.

Belongs to the eukaryotic ribosomal protein eS25 family. Component of the small ribosomal subunit.

The protein resides in the cytoplasm. In terms of biological role, component of the small ribosomal subunit. The ribosome is a large ribonucleoprotein complex responsible for the synthesis of proteins in the cell. The sequence is that of Small ribosomal subunit protein eS25 (RPS25) from Homo sapiens (Human).